The following is a 438-amino-acid chain: UDP-N-acetylmuramoylalanine--D-glutamate ligase (438 aa).

An ATP-binding site is contributed by 112-118 (GSNGKST).

This sequence belongs to the MurCDEF family.

It localises to the cytoplasm. It carries out the reaction UDP-N-acetyl-alpha-D-muramoyl-L-alanine + D-glutamate + ATP = UDP-N-acetyl-alpha-D-muramoyl-L-alanyl-D-glutamate + ADP + phosphate + H(+). It functions in the pathway cell wall biogenesis; peptidoglycan biosynthesis. Cell wall formation. Catalyzes the addition of glutamate to the nucleotide precursor UDP-N-acetylmuramoyl-L-alanine (UMA). This is UDP-N-acetylmuramoylalanine--D-glutamate ligase from Shigella boydii serotype 4 (strain Sb227).